Here is a 172-residue protein sequence, read N- to C-terminus: Small ribosomal subunit protein uS5 (172 aa).

Positions 11–74 constitute an S5 DRBM domain; the sequence is LSEVLVDVNR…QAAKKRMMKV (64 aa).

The protein belongs to the universal ribosomal protein uS5 family. In terms of assembly, part of the 30S ribosomal subunit. Contacts proteins S4 and S8.

Functionally, with S4 and S12 plays an important role in translational accuracy. In terms of biological role, located at the back of the 30S subunit body where it stabilizes the conformation of the head with respect to the body. The polypeptide is Small ribosomal subunit protein uS5 (Rickettsia canadensis (strain McKiel)).